We begin with the raw amino-acid sequence, 398 residues long: Serpin-Z1A (398 aa).

The interval G343 to F367 is RCL.

It belongs to the serpin family.

Inhibits chymotrypsin and cathepsin G in vitro. The protein is Serpin-Z1A (WZCI) of Triticum aestivum (Wheat).